The sequence spans 307 residues: Homoserine kinase (307 aa).

85-95 (PLTRGLGSSAA) is a binding site for ATP.

It belongs to the GHMP kinase family. Homoserine kinase subfamily.

The protein resides in the cytoplasm. It carries out the reaction L-homoserine + ATP = O-phospho-L-homoserine + ADP + H(+). Its pathway is amino-acid biosynthesis; L-threonine biosynthesis; L-threonine from L-aspartate: step 4/5. Functionally, catalyzes the ATP-dependent phosphorylation of L-homoserine to L-homoserine phosphate. The protein is Homoserine kinase of Caldicellulosiruptor bescii (strain ATCC BAA-1888 / DSM 6725 / KCTC 15123 / Z-1320) (Anaerocellum thermophilum).